Here is a 352-residue protein sequence, read N- to C-terminus: Biotin synthase (352 aa).

In terms of domain architecture, Radical SAM core spans 44-262 (NRVQVSTLLS…LAVARIMMPK (219 aa)). [4Fe-4S] cluster is bound by residues Cys59, Cys63, and Cys66. [2Fe-2S] cluster contacts are provided by Cys103, Cys134, Cys194, and Arg266.

Belongs to the radical SAM superfamily. Biotin synthase family. In terms of assembly, homodimer. [4Fe-4S] cluster serves as cofactor. [2Fe-2S] cluster is required as a cofactor.

The enzyme catalyses (4R,5S)-dethiobiotin + (sulfur carrier)-SH + 2 reduced [2Fe-2S]-[ferredoxin] + 2 S-adenosyl-L-methionine = (sulfur carrier)-H + biotin + 2 5'-deoxyadenosine + 2 L-methionine + 2 oxidized [2Fe-2S]-[ferredoxin]. The protein operates within cofactor biosynthesis; biotin biosynthesis; biotin from 7,8-diaminononanoate: step 2/2. Its function is as follows. Catalyzes the conversion of dethiobiotin (DTB) to biotin by the insertion of a sulfur atom into dethiobiotin via a radical-based mechanism. The protein is Biotin synthase of Pseudomonas paraeruginosa (strain DSM 24068 / PA7) (Pseudomonas aeruginosa (strain PA7)).